The primary structure comprises 488 residues: Multidrug resistance outer membrane protein MdtP (488 aa).

The first 23 residues, 1–23, serve as a signal peptide directing secretion; the sequence is MINRQLSRLLLCSILGSTTLISG. Cys24 carries N-palmitoyl cysteine lipidation. A lipid anchor (S-diacylglycerol cysteine) is attached at Cys24.

It belongs to the outer membrane factor (OMF) (TC 1.B.17) family. As to quaternary structure, could be part of a tripartite efflux system composed of MdtN, MdtO and MdtP.

The protein localises to the cell outer membrane. Functionally, could be involved in resistance to puromycin, acriflavine and tetraphenylarsonium chloride. In Shigella flexneri, this protein is Multidrug resistance outer membrane protein MdtP (mdtP).